Consider the following 850-residue polypeptide: Bifunctional uridylyltransferase/uridylyl-removing enzyme (850 aa).

The uridylyltransferase stretch occupies residues 1–317 (MSARPFADLR…LFPVVAPPLP (317 aa)). Residues 318-673 (IDDDFQLRAG…ARLSPAGEGI (356 aa)) form a uridylyl-removing region. An HD domain is found at 436–558 (VDEHILTVLR…VGDTRRLDAL (123 aa)). 2 ACT domains span residues 674–755 (QVMV…AVQP) and 783–850 (VLSI…GVLG).

The protein belongs to the GlnD family. Mg(2+) serves as cofactor.

The catalysed reaction is [protein-PII]-L-tyrosine + UTP = [protein-PII]-uridylyl-L-tyrosine + diphosphate. It carries out the reaction [protein-PII]-uridylyl-L-tyrosine + H2O = [protein-PII]-L-tyrosine + UMP + H(+). Uridylyltransferase (UTase) activity is inhibited by glutamine, while glutamine activates uridylyl-removing (UR) activity. Functionally, modifies, by uridylylation and deuridylylation, the PII regulatory proteins (GlnB and homologs), in response to the nitrogen status of the cell that GlnD senses through the glutamine level. Under low glutamine levels, catalyzes the conversion of the PII proteins and UTP to PII-UMP and PPi, while under higher glutamine levels, GlnD hydrolyzes PII-UMP to PII and UMP (deuridylylation). Thus, controls uridylylation state and activity of the PII proteins, and plays an important role in the regulation of nitrogen assimilation and metabolism. This Thiobacillus denitrificans (strain ATCC 25259 / T1) protein is Bifunctional uridylyltransferase/uridylyl-removing enzyme.